Here is a 170-residue protein sequence, read N- to C-terminus: Chorion protein S18 (170 aa).

An N-terminal signal peptide occupies residues 1-17 (MMKFMCIFVCAIAAVSA). Low complexity predominate over residues 146–159 (AAAASSSVAGQHSG). The segment at 146 to 170 (AAAASSSVAGQHSGYKNSGYKNSSY) is disordered. Over residues 160–170 (YKNSGYKNSSY) the composition is skewed to polar residues.

Belongs to the chorion protein S15/S18 family.

The protein resides in the secreted. In terms of biological role, chorion membrane (egg shell) protein; plays a role in protecting the egg from the environment. The polypeptide is Chorion protein S18 (Cp18) (Drosophila virilis (Fruit fly)).